The chain runs to 195 residues: Probable DNA-directed RNA polymerase subunit delta (195 aa).

Positions 14-81 constitute an HTH HARE-type domain; that stretch reads LSMIEVAHAI…GDNTWGLRAW (68 aa). The segment at 91–195 is disordered; the sequence is TVGETEDEED…DEEDKEDDEE (105 aa). Composition is skewed to acidic residues over residues 116–171 and 179–195; these read TDDD…EDQL and FGDD…DDEE.

This sequence belongs to the RpoE family. RNAP is composed of a core of 2 alpha, a beta and a beta' subunits. The core is associated with a delta subunit and one of several sigma factors.

Participates in both the initiation and recycling phases of transcription. In the presence of the delta subunit, RNAP displays an increased specificity of transcription, a decreased affinity for nucleic acids, and an increased efficiency of RNA synthesis because of enhanced recycling. In Limosilactobacillus fermentum (strain NBRC 3956 / LMG 18251) (Lactobacillus fermentum), this protein is Probable DNA-directed RNA polymerase subunit delta.